Consider the following 322-residue polypeptide: Glutamyl-Q tRNA(Asp) synthetase (322 aa).

L-glutamate contacts are provided by residues Arg28 to Ser32 and Glu64. Residues Pro31–Ser41 carry the 'HIGH' region motif. The Zn(2+) site is built by Cys120, Cys122, Tyr134, and Cys138. Positions 191 and 209 each coordinate L-glutamate. The short motif at Lys247–Gln251 is the 'KMSKS' region element. Lys250 serves as a coordination point for ATP.

Belongs to the class-I aminoacyl-tRNA synthetase family. GluQ subfamily. The cofactor is Zn(2+).

Functionally, catalyzes the tRNA-independent activation of glutamate in presence of ATP and the subsequent transfer of glutamate onto a tRNA(Asp). Glutamate is transferred on the 2-amino-5-(4,5-dihydroxy-2-cyclopenten-1-yl) moiety of the queuosine in the wobble position of the QUC anticodon. The polypeptide is Glutamyl-Q tRNA(Asp) synthetase (Pectobacterium atrosepticum (strain SCRI 1043 / ATCC BAA-672) (Erwinia carotovora subsp. atroseptica)).